Here is a 196-residue protein sequence, read N- to C-terminus: Large ribosomal subunit protein uL10 (196 aa).

The interval 163–196 (GAPAAAEAPAAEEAPAAEAAETEAPAEAAATEEN) is disordered. Over residues 164-196 (APAAAEAPAAEEAPAAEAAETEAPAEAAATEEN) the composition is skewed to low complexity.

This sequence belongs to the universal ribosomal protein uL10 family. In terms of assembly, part of the ribosomal stalk of the 50S ribosomal subunit. The N-terminus interacts with L11 and the large rRNA to form the base of the stalk. The C-terminus forms an elongated spine to which L12 dimers bind in a sequential fashion forming a multimeric L10(L12)X complex.

Forms part of the ribosomal stalk, playing a central role in the interaction of the ribosome with GTP-bound translation factors. The sequence is that of Large ribosomal subunit protein uL10 from Arthrobacter sp. (strain FB24).